A 239-amino-acid polypeptide reads, in one-letter code: MSLEYLPPVRRRIGQYNHLRIYKKILLLKSNFEKLNFFLGNLFPEELHDSKIHVYFEVRLGCRIPDCIIVFRHFGEKLLKTFHCYFFEFKTTFAKSNLFSIQKNRTQKIQYLQGLRQLRQATDYLQQFVIKNESLCKVNPVICFFRQHGLKLDFVKTFIAKELQLSSTFLCNLFTKYQNDTVKSILSISNPTNFRRACQKYSNLYRGRYATTPKLGNSKTSKRKRRNSKKQDFKKLVKN.

The disordered stretch occupies residues 212–239 (TPKLGNSKTSKRKRRNSKKQDFKKLVKN). Residues 229 to 239 (KKQDFKKLVKN) show a composition bias toward basic and acidic residues.

This sequence belongs to the herpesviridae UL24 family.

It localises to the virion. It is found in the host cytoplasm. The protein localises to the host nucleus. The protein resides in the host nucleolus. Its subcellular location is the host Golgi apparatus. In terms of biological role, may participate in nuclear egress of viral particles. Plays a role in the dispersal of several host nucleolar proteins including NCL/nucleolin and NPM1. Since deletion of host NCL/nucleolin negatively impact on nuclear egress, UL24 supposedly acts on this process through its effect on host nucleoli. The polypeptide is Protein UL24 homolog (U49) (Homo sapiens (Human)).